The sequence spans 135 residues: uncharacterized protein (135 aa).

Residues 8 to 123 (PKGKMVLRTL…IFVYVAVDEF (116 aa)) form the HotDog ACOT-type domain.

This sequence belongs to the acyl coenzyme A hydrolase family.

This is an uncharacterized protein from Buchnera aphidicola subsp. Baizongia pistaciae (strain Bp).